A 258-amino-acid chain; its full sequence is Pimeloyl-[acyl-carrier protein] methyl ester esterase (258 aa).

One can recognise an AB hydrolase-1 domain in the interval 16–244 (LVLVHGWGMN…QSSHAPFMTE (229 aa)). Residues Trp-22, 82–83 (SL), and 146–150 (FMALQ) contribute to the substrate site. The Nucleophile role is filled by Ser-82. Residues Asp-210 and His-238 contribute to the active site. His-238 is a substrate binding site.

This sequence belongs to the AB hydrolase superfamily. Carboxylesterase BioH family. In terms of assembly, monomer.

Its subcellular location is the cytoplasm. The catalysed reaction is 6-carboxyhexanoyl-[ACP] methyl ester + H2O = 6-carboxyhexanoyl-[ACP] + methanol + H(+). Its pathway is cofactor biosynthesis; biotin biosynthesis. Its function is as follows. The physiological role of BioH is to remove the methyl group introduced by BioC when the pimeloyl moiety is complete. It allows to synthesize pimeloyl-ACP via the fatty acid synthetic pathway through the hydrolysis of the ester bonds of pimeloyl-ACP esters. The sequence is that of Pimeloyl-[acyl-carrier protein] methyl ester esterase from Vibrio atlanticus (strain LGP32) (Vibrio splendidus (strain Mel32)).